The primary structure comprises 307 residues: Nitric oxide synthase-interacting protein homolog (307 aa).

Positions P120–N159 are disordered. The segment covering S127–S155 has biased composition (low complexity).

It belongs to the NOSIP family.

It is found in the cytoplasm. The protein localises to the nucleus. Negatively regulates nitric oxide production by inducing nitric oxide synthase translocation to actin cytoskeleton and inhibiting its enzymatic activity. This Drosophila melanogaster (Fruit fly) protein is Nitric oxide synthase-interacting protein homolog.